Here is a 100-residue protein sequence, read N- to C-terminus: Histone H3-like 2 (100 aa).

Residues 1–46 form a disordered region; that stretch reads MARMKHTARMSTGGKAPRKQLASKALRKAPPPPTKGVKQPTTTTSG.

Belongs to the histone H3 family. As to quaternary structure, the nucleosome is a histone octamer containing two molecules each of H2A, H2B, H3 and H4 assembled in one H3-H4 heterotetramer and two H2A-H2B heterodimers. The octamer wraps approximately 147 bp of DNA. As to expression, pollen specific.

Its subcellular location is the nucleus. The protein resides in the chromosome. Functionally, core component of nucleosome. Nucleosomes wrap and compact DNA into chromatin, limiting DNA accessibility to the cellular machineries which require DNA as a template. Histones thereby play a central role in transcription regulation, DNA repair, DNA replication and chromosomal stability. DNA accessibility is regulated via a complex set of post-translational modifications of histones, also called histone code, and nucleosome remodeling. In Lilium longiflorum (Trumpet lily), this protein is Histone H3-like 2 (gcH3).